A 410-amino-acid chain; its full sequence is Putative ribosomal large subunit pseudouridine synthase SVR1, chloroplastic (410 aa).

The N-terminal 35 residues, 1–35 (MASVAASSSISFAASFLKIKAFPLSPRFFPIRTLR), are a transit peptide targeting the chloroplast. The tract at residues 96–143 (HNLAIDATTQNPKKKDKSKKKQPQATSSSSATTTASSPASHSEVKPKL) is disordered. A compositionally biased stretch (basic residues) spans 107-117 (PKKKDKSKKKQ). The span at 118-135 (PQATSSSSATTTASSPAS) shows a compositional bias: low complexity. The 70-residue stretch at 160–229 (QRLSKVLAAA…PKVYFALNKP (70 aa)) folds into the S4 RNA-binding domain. D274 (nucleophile) is an active-site residue.

It belongs to the pseudouridine synthase RsuA family. Highly expressed in young seedlings. Expressed in roots, rosette leaves, cauline leaves, stems and flowers.

It is found in the plastid. It localises to the chloroplast. Its function is as follows. Responsible for synthesis of pseudouridine in chloroplastic 23S ribosomal RNA. Necessary for normal chloroplast rRNA processing and translation. Required for normal chloroplast development and maintenance. May function in other plastids, such as root amyloplasts. The protein is Putative ribosomal large subunit pseudouridine synthase SVR1, chloroplastic (SVR1) of Arabidopsis thaliana (Mouse-ear cress).